Consider the following 790-residue polypeptide: Probable E3 ubiquitin-protein ligase MARCHF10 (790 aa).

The tract at residues 33–240 (LKRQEHKKEP…PQNEPHTALS (208 aa)) is disordered. Residues 34-48 (KRQEHKKEPNEKKQE) are compositionally biased toward basic and acidic residues. The span at 61-70 (FSSGSSCKQS) shows a compositional bias: low complexity. A Phosphoserine modification is found at S78. A compositionally biased stretch (basic and acidic residues) spans 218–227 (PLERQKKGDP). A compositionally biased stretch (polar residues) spans 230–240 (RPQNEPHTALS). The stretch at 284–308 (LSLNNEQENYDTEEETRTEEELLLA) forms a coiled coil. Disordered regions lie at residues 323–416 (GTSA…EDVS) and 507–569 (LSPI…RHLQ). 3 stretches are compositionally biased toward polar residues: residues 355 to 370 (RKTS…SSPG), 406 to 416 (GVTQVSAEDVS), and 511 to 520 (RNRNPSAASE). The segment covering 521 to 533 (SHSEDTQGEEERA) has biased composition (basic and acidic residues). Positions 534–563 (STSQAQESPLLSDLPNPQSSMALGDSPSSP) are enriched in polar residues. Residues 633-703 (DSEEEGDLCR…EMCKQGLLVD (71 aa)) form an RING-CH-type zinc finger. Zn(2+)-binding residues include C641, C644, C659, C661, H669, C672, C693, and C696. Positions 757-790 (ERMSRNYPQPRPEESESSESGDGNESNVYPGRVI) are disordered. Residues 774–783 (SESGDGNESN) are compositionally biased toward low complexity.

It catalyses the reaction S-ubiquitinyl-[E2 ubiquitin-conjugating enzyme]-L-cysteine + [acceptor protein]-L-lysine = [E2 ubiquitin-conjugating enzyme]-L-cysteine + N(6)-ubiquitinyl-[acceptor protein]-L-lysine.. It participates in protein modification; protein ubiquitination. Its function is as follows. E3 ubiquitin-protein ligase. E3 ubiquitin ligases accept ubiquitin from an E2 ubiquitin-conjugating enzyme in the form of a thioester and then directly transfer the ubiquitin to targeted substrates. The polypeptide is Probable E3 ubiquitin-protein ligase MARCHF10 (Marchf10) (Rattus norvegicus (Rat)).